The chain runs to 204 residues: MASTSMSLTRACKVHAVLACSIPSVSSAFLTTNVTFLGQPVEMPSQRWSQRRCSRPGPVTVRAEEVKEVTQAKGLSRESGGQWLSCTTRHVRIYAGYVDPETQVMDQSQLDKLTLMLDPDNEFEWPEEMVEKVYDKYRELVETYAGADLTEYTLRLIGSDLEHYIRKLLLAGELKYNLDCRVLNFSMGKPRIDPADLDDVEVEE.

A chloroplast-targeting transit peptide spans 1–27; sequence MASTSMSLTRACKVHAVLACSIPSVSS.

It belongs to the NDH complex subunit M family. As to quaternary structure, part of the chloroplast NDH complex, composed of a mixture of chloroplast and nucleus encoded subunits. Component of the NDH subcomplex A, at least composed of ndhH, ndhI, ndhJ, ndhK, ndhL, ndhM, ndhN and ndhO.

It localises to the plastid. The protein resides in the chloroplast thylakoid membrane. The enzyme catalyses a plastoquinone + NADH + (n+1) H(+)(in) = a plastoquinol + NAD(+) + n H(+)(out). The catalysed reaction is a plastoquinone + NADPH + (n+1) H(+)(in) = a plastoquinol + NADP(+) + n H(+)(out). In terms of biological role, NDH shuttles electrons from NAD(P)H:plastoquinone, via FMN and iron-sulfur (Fe-S) centers, to quinones in the photosynthetic chain and possibly in a chloroplast respiratory chain. The immediate electron acceptor for the enzyme in this species is believed to be plastoquinone. Couples the redox reaction to proton translocation, and thus conserves the redox energy in a proton gradient. This Physcomitrium patens (Spreading-leaved earth moss) protein is NAD(P)H-quinone oxidoreductase subunit M, chloroplastic.